Consider the following 412-residue polypeptide: Multifunctional CCA protein (412 aa).

ATP is bound by residues Gly-8 and Arg-11. Gly-8 and Arg-11 together coordinate CTP. The Mg(2+) site is built by Asp-21 and Asp-23. Arg-91, Arg-137, and Arg-140 together coordinate ATP. CTP contacts are provided by Arg-91, Arg-137, and Arg-140. One can recognise an HD domain in the interval 228 to 329 (TGIHTLMTLS…VKLFDSIDAW (102 aa)).

The protein belongs to the tRNA nucleotidyltransferase/poly(A) polymerase family. Bacterial CCA-adding enzyme type 1 subfamily. Monomer. Can also form homodimers and oligomers. Requires Mg(2+) as cofactor. It depends on Ni(2+) as a cofactor.

The catalysed reaction is a tRNA precursor + 2 CTP + ATP = a tRNA with a 3' CCA end + 3 diphosphate. It catalyses the reaction a tRNA with a 3' CCA end + 2 CTP + ATP = a tRNA with a 3' CCACCA end + 3 diphosphate. Catalyzes the addition and repair of the essential 3'-terminal CCA sequence in tRNAs without using a nucleic acid template. Adds these three nucleotides in the order of C, C, and A to the tRNA nucleotide-73, using CTP and ATP as substrates and producing inorganic pyrophosphate. tRNA 3'-terminal CCA addition is required both for tRNA processing and repair. Also involved in tRNA surveillance by mediating tandem CCA addition to generate a CCACCA at the 3' terminus of unstable tRNAs. While stable tRNAs receive only 3'-terminal CCA, unstable tRNAs are marked with CCACCA and rapidly degraded. This Escherichia coli O81 (strain ED1a) protein is Multifunctional CCA protein.